A 152-amino-acid chain; its full sequence is Interleukin-3 (152 aa).

The signal sequence occupies residues 1-19 (MSCLPVLLLLQLLVSPGLQ). N-linked (GlcNAc...) asparagine glycosylation is found at asparagine 34 and asparagine 89. An intrachain disulfide couples cysteine 35 to cysteine 103.

Belongs to the IL-3 family. In terms of assembly, monomer. As to expression, activated T-cells, mast cells, natural killer cells.

The protein localises to the secreted. In terms of biological role, granulocyte/macrophage colony-stimulating factors are cytokines that act in hematopoiesis by controlling the production, differentiation, and function of 2 related white cell populations of the blood, the granulocytes and the monocytes-macrophages. Its function is as follows. This CSF induces granulocytes, macrophages, mast cells, stem cells, erythroid cells, eosinophils and megakaryocytes. This Hylobates lar (Lar gibbon) protein is Interleukin-3 (IL3).